The sequence spans 208 residues: Small ribosomal subunit protein eS8 (208 aa).

The interval 1–27 (MGISRDNWHKRRRTGGKRKPVHKKRKY) is disordered. Residues 8-26 (WHKRRRTGGKRKPVHKKRK) show a composition bias toward basic residues.

Belongs to the eukaryotic ribosomal protein eS8 family. As to quaternary structure, component of the small ribosomal subunit. Identified in a IGF2BP1-dependent mRNP granule complex containing untranslated mRNAs. Part of the small subunit (SSU) processome, composed of more than 70 proteins and the RNA chaperone small nucleolar RNA (snoRNA) U3.

Its subcellular location is the cytoplasm. The protein resides in the membrane. It localises to the nucleus. The protein localises to the nucleolus. Functionally, component of the small ribosomal subunit. The ribosome is a large ribonucleoprotein complex responsible for the synthesis of proteins in the cell. Part of the small subunit (SSU) processome, first precursor of the small eukaryotic ribosomal subunit. During the assembly of the SSU processome in the nucleolus, many ribosome biogenesis factors, an RNA chaperone and ribosomal proteins associate with the nascent pre-rRNA and work in concert to generate RNA folding, modifications, rearrangements and cleavage as well as targeted degradation of pre-ribosomal RNA by the RNA exosome. The polypeptide is Small ribosomal subunit protein eS8 (rps8) (Danio rerio (Zebrafish)).